A 177-amino-acid polypeptide reads, in one-letter code: Peptide methionine sulfoxide reductase MsrA (177 aa).

The active site involves Cys15.

It belongs to the MsrA Met sulfoxide reductase family.

The enzyme catalyses L-methionyl-[protein] + [thioredoxin]-disulfide + H2O = L-methionyl-(S)-S-oxide-[protein] + [thioredoxin]-dithiol. It carries out the reaction [thioredoxin]-disulfide + L-methionine + H2O = L-methionine (S)-S-oxide + [thioredoxin]-dithiol. Its function is as follows. Has an important function as a repair enzyme for proteins that have been inactivated by oxidation. Catalyzes the reversible oxidation-reduction of methionine sulfoxide in proteins to methionine. The polypeptide is Peptide methionine sulfoxide reductase MsrA (Mycobacterium leprae (strain Br4923)).